The sequence spans 280 residues: UDP-2,3-diacylglucosamine pyrophosphatase LpxI (280 aa).

Residues Ala-12, 74 to 75, Gln-169, 187 to 188, Lys-214, and 226 to 233 each bind substrate; these read NV, TD, and LPTIGVAT.

Belongs to the LpxI family. Homodimer. Mg(2+) serves as cofactor.

It is found in the cell inner membrane. The enzyme catalyses UDP-2-N,3-O-bis[(3R)-3-hydroxytetradecanoyl]-alpha-D-glucosamine + H2O = 2-N,3-O-bis[(3R)-3-hydroxytetradecanoyl]-alpha-D-glucosaminyl 1-phosphate + UMP + 2 H(+). It functions in the pathway glycolipid biosynthesis; lipid IV(A) biosynthesis; lipid IV(A) from (3R)-3-hydroxytetradecanoyl-[acyl-carrier-protein] and UDP-N-acetyl-alpha-D-glucosamine: step 4/6. Its activity is regulated as follows. Inhibited by high concentrations of Cu(2+) and Zn(2+). Completely inhibited by EDTA in vitro. Functionally, hydrolyzes the pyrophosphate bond of UDP-2,3-diacylglucosamine to form 2,3-diacylglucosamine 1-phosphate (lipid X) and UMP by catalyzing the attack of water at the beta-P atom. Involved in the biosynthesis of lipid A, a phosphorylated glycolipid that anchors the lipopolysaccharide to the outer membrane of the cell. Can functionally complement lpxH deficiency in E.coli. Cannot use CDP-diacylglycerol as substrate. The chain is UDP-2,3-diacylglucosamine pyrophosphatase LpxI from Caulobacter vibrioides (strain ATCC 19089 / CIP 103742 / CB 15) (Caulobacter crescentus).